A 660-amino-acid chain; its full sequence is Methionine--tRNA ligase (660 aa).

The short motif at 15–25 is the 'HIGH' region element; that stretch reads YYPSDKLHIGH. Residues 311-315 carry the 'KMSKS' region motif; the sequence is KMSKS. Residue K314 coordinates ATP. The interval 535–554 is disordered; that stretch reads LMGGSKKPEEAPKDEKEESD. Over residues 540–550 the composition is skewed to basic and acidic residues; it reads KKPEEAPKDEK. Residues 560-660 enclose the tRNA-binding domain; it reads DFSKVELRIA…GALPNGSLVK (101 aa).

It belongs to the class-I aminoacyl-tRNA synthetase family. MetG type 2B subfamily. Homodimer.

The protein resides in the cytoplasm. The enzyme catalyses tRNA(Met) + L-methionine + ATP = L-methionyl-tRNA(Met) + AMP + diphosphate. Is required not only for elongation of protein synthesis but also for the initiation of all mRNA translation through initiator tRNA(fMet) aminoacylation. The protein is Methionine--tRNA ligase (metG) of Halalkalibacterium halodurans (strain ATCC BAA-125 / DSM 18197 / FERM 7344 / JCM 9153 / C-125) (Bacillus halodurans).